The primary structure comprises 92 residues: Small ribosomal subunit protein uS19 (92 aa).

This sequence belongs to the universal ribosomal protein uS19 family.

Functionally, protein S19 forms a complex with S13 that binds strongly to the 16S ribosomal RNA. This is Small ribosomal subunit protein uS19 from Rhodospirillum centenum (strain ATCC 51521 / SW).